The chain runs to 324 residues: Probable carboxylesterase 9 (324 aa).

The short motif at 86–88 is the Involved in the stabilization of the negatively charged intermediate by the formation of the oxyanion hole element; sequence HGS. Active-site residues include Ser171, Asp272, and His302.

Belongs to the 'GDXG' lipolytic enzyme family. Expressed in flowers.

It catalyses the reaction a carboxylic ester + H2O = an alcohol + a carboxylate + H(+). Carboxylesterase acting on esters with varying acyl chain length. The sequence is that of Probable carboxylesterase 9 (CXE9) from Arabidopsis thaliana (Mouse-ear cress).